A 423-amino-acid polypeptide reads, in one-letter code: Phosphoribosylamine--glycine ligase (423 aa).

One can recognise an ATP-grasp domain in the interval 107–312; it reads KDLCARYDIP…LLPILYATAT (206 aa). 133–193 serves as a coordination point for ATP; it reads VRAQGAPIVI…EAFLDGEEAS (61 aa). Mg(2+) is bound by residues Glu282 and Asn284.

The protein belongs to the GARS family. Mg(2+) is required as a cofactor. Requires Mn(2+) as cofactor.

The catalysed reaction is 5-phospho-beta-D-ribosylamine + glycine + ATP = N(1)-(5-phospho-beta-D-ribosyl)glycinamide + ADP + phosphate + H(+). The protein operates within purine metabolism; IMP biosynthesis via de novo pathway; N(1)-(5-phospho-D-ribosyl)glycinamide from 5-phospho-alpha-D-ribose 1-diphosphate: step 2/2. In Agrobacterium fabrum (strain C58 / ATCC 33970) (Agrobacterium tumefaciens (strain C58)), this protein is Phosphoribosylamine--glycine ligase.